Here is a 401-residue protein sequence, read N- to C-terminus: uncharacterized protein (401 aa).

Positions 7, 13, 16, and 94 each coordinate [4Fe-4S] cluster. Glutamine 230, tyrosine 259, glutamate 280, and aspartate 328 together coordinate S-adenosyl-L-methionine. Catalysis depends on cysteine 355, which acts as the Nucleophile.

It belongs to the class I-like SAM-binding methyltransferase superfamily. RNA M5U methyltransferase family.

This is an uncharacterized protein from Chlamydia caviae (strain ATCC VR-813 / DSM 19441 / 03DC25 / GPIC) (Chlamydophila caviae).